We begin with the raw amino-acid sequence, 162 residues long: uncharacterized protein (162 aa).

Belongs to the M.jannaschii MJ0150/MJ0739/MJ0745/MJ1460/MJ1642 family.

This is an uncharacterized protein from Methanocaldococcus jannaschii (strain ATCC 43067 / DSM 2661 / JAL-1 / JCM 10045 / NBRC 100440) (Methanococcus jannaschii).